Consider the following 472-residue polypeptide: MRLLVIFLLALLLMACKEAPKPLADPRTTKEIIVVTHNGPSTYYYSGNNQYAGLEHDLVRNFVRELGPEYSVKFLVVNNISQVIPTLLKHKAHFAAADLSITRTREHLVRFTRPYQKVQQQIVFNNELTKAPKNIKELLNRQIAVPSGTSYSERLQRLKEQEPLLSWTETPHANSDELMAQVAEGELDFTVADGHLIALVQNYYPNLGATLALGKPEEIAWAFPKTGDTWLYEKANAFFTRISQDGTLNHLIDRYYGHADRLKPVDVTTFMQRSETLLPQYKRLFYEAQELTGLDWRLVAAIAYQESHWDRFNTSPTNVRGMMMLTEDTADRLGVTDRLDARQSIIAGARYVLMLKDLIPDSVHEPDRTWMALAAYNIGYAHLQDARILAKRLKLNPDRWVDVKKALPLLSKEEYFSTLKYGFARGGAPVVFVESVRTYHKILARREPRHTPIFPSFEVANLNGFGNTLSQE.

An N-terminal signal peptide occupies residues 1 to 24 (MRLLVIFLLALLLMACKEAPKPLA). The non-LT domain stretch occupies residues 25–259 (DPRTTKEIIV…HLIDRYYGHA (235 aa)). The LT domain stretch occupies residues 260–472 (DRLKPVDVTT…NGFGNTLSQE (213 aa)). Glu-306 is a catalytic residue.

This sequence in the N-terminal section; belongs to the bacterial solute-binding protein 3 family. In the C-terminal section; belongs to the transglycosylase Slt family.

The protein resides in the cell outer membrane. The enzyme catalyses Exolytic cleavage of the (1-&gt;4)-beta-glycosidic linkage between N-acetylmuramic acid (MurNAc) and N-acetylglucosamine (GlcNAc) residues in peptidoglycan, from either the reducing or the non-reducing ends of the peptidoglycan chains, with concomitant formation of a 1,6-anhydrobond in the MurNAc residue.. Functionally, murein-degrading enzyme that degrades murein glycan strands and insoluble, high-molecular weight murein sacculi, with the concomitant formation of a 1,6-anhydromuramoyl product. Lytic transglycosylases (LTs) play an integral role in the metabolism of the peptidoglycan (PG) sacculus. Their lytic action creates space within the PG sacculus to allow for its expansion as well as for the insertion of various structures such as secretion systems and flagella. This Methylobacillus flagellatus (strain ATCC 51484 / DSM 6875 / VKM B-1610 / KT) protein is Membrane-bound lytic murein transglycosylase F.